The sequence spans 309 residues: MEMYPRHRYSKHSVFKGFSDKVRKNDLDMNVVKELLSNGASLTIKDSSNKDPITVYFRRTIMNLEMIDERKYIVHSYLKNYKNFDYPFFRKLVLTNKHCLNNYYNISDSKYGTPLHILASNKKLITPNYMKLLVYNGNDINARGEDTQMRTPLHKYLCKFVYHNIEYGIRYYNEKIIDAFIELGADLTIPNDDGMIPVVYCIHSNAEYGYNNITNIKIIRKLLNLSRRASHNLFRDRVMHDYISNTYIDLECLDIIRSLDGFDINGYFEGRTPLHCAIQHNFTQIAKYLLDRGADIVVPNTLIIHQYIQ.

ANK repeat units lie at residues Ser13 to Ile44, Lys110 to Ala142, Phe160 to Ile189, Pro197 to His231, and Glu269 to Val298.

Belongs to the orthopoxviruses VACWR203 protein family.

The chain is Ankyrin repeat protein VACWR203 from Bos taurus (Bovine).